Here is a 334-residue protein sequence, read N- to C-terminus: Glucokinase-like protein PD_0680 (334 aa).

18–23 contributes to the ATP binding site; it reads ADVGGT.

It belongs to the bacterial glucokinase family.

The polypeptide is Glucokinase-like protein PD_0680 (Xylella fastidiosa (strain Temecula1 / ATCC 700964)).